Consider the following 172-residue polypeptide: Crossover junction endodeoxyribonuclease RuvC (172 aa).

Active-site residues include Asp-8, Glu-67, and Asp-139. Residues Asp-8, Glu-67, and Asp-139 each contribute to the Mg(2+) site.

This sequence belongs to the RuvC family. In terms of assembly, homodimer which binds Holliday junction (HJ) DNA. The HJ becomes 2-fold symmetrical on binding to RuvC with unstacked arms; it has a different conformation from HJ DNA in complex with RuvA. In the full resolvosome a probable DNA-RuvA(4)-RuvB(12)-RuvC(2) complex forms which resolves the HJ. The cofactor is Mg(2+).

It localises to the cytoplasm. The enzyme catalyses Endonucleolytic cleavage at a junction such as a reciprocal single-stranded crossover between two homologous DNA duplexes (Holliday junction).. In terms of biological role, the RuvA-RuvB-RuvC complex processes Holliday junction (HJ) DNA during genetic recombination and DNA repair. Endonuclease that resolves HJ intermediates. Cleaves cruciform DNA by making single-stranded nicks across the HJ at symmetrical positions within the homologous arms, yielding a 5'-phosphate and a 3'-hydroxyl group; requires a central core of homology in the junction. The consensus cleavage sequence is 5'-(A/T)TT(C/G)-3'. Cleavage occurs on the 3'-side of the TT dinucleotide at the point of strand exchange. HJ branch migration catalyzed by RuvA-RuvB allows RuvC to scan DNA until it finds its consensus sequence, where it cleaves and resolves the cruciform DNA. The polypeptide is Crossover junction endodeoxyribonuclease RuvC (Hahella chejuensis (strain KCTC 2396)).